The sequence spans 475 residues: tRNA-2-methylthio-N(6)-dimethylallyladenosine synthase (475 aa).

Residues 1–10 show a composition bias toward basic and acidic residues; it reads MQETTVKRDG. Residues 1–22 form a disordered region; sequence MQETTVKRDGASPSDAGTPATT. An MTTase N-terminal domain is found at 27-144; it reads GKLYIRTFGC…LPDLIKRRRA (118 aa). 6 residues coordinate [4Fe-4S] cluster: cysteine 36, cysteine 73, cysteine 107, cysteine 181, cysteine 185, and cysteine 188. The 234-residue stretch at 167–400 folds into the Radical SAM core domain; it reads RVDGATAFVS…QALINQQAAA (234 aa). The TRAM domain maps to 403–466; that stretch reads QGMIGTRQRV…TNSLRGRVAG (64 aa).

The protein belongs to the methylthiotransferase family. MiaB subfamily. In terms of assembly, monomer. [4Fe-4S] cluster serves as cofactor.

Its subcellular location is the cytoplasm. It carries out the reaction N(6)-dimethylallyladenosine(37) in tRNA + (sulfur carrier)-SH + AH2 + 2 S-adenosyl-L-methionine = 2-methylsulfanyl-N(6)-dimethylallyladenosine(37) in tRNA + (sulfur carrier)-H + 5'-deoxyadenosine + L-methionine + A + S-adenosyl-L-homocysteine + 2 H(+). In terms of biological role, catalyzes the methylthiolation of N6-(dimethylallyl)adenosine (i(6)A), leading to the formation of 2-methylthio-N6-(dimethylallyl)adenosine (ms(2)i(6)A) at position 37 in tRNAs that read codons beginning with uridine. The sequence is that of tRNA-2-methylthio-N(6)-dimethylallyladenosine synthase from Bordetella bronchiseptica (strain ATCC BAA-588 / NCTC 13252 / RB50) (Alcaligenes bronchisepticus).